Consider the following 633-residue polypeptide: Electron transfer flavoprotein-ubiquinone oxidoreductase, mitochondrial (633 aa).

The transit peptide at 1 to 90 (MHRFLVKLSS…NGITSSRCIS (90 aa)) directs the protein to the mitochondrion. 102-116 (VLIVGAGPAGLSAAI) contacts FAD. Residues 140 to 161 (VGGHIISGNVFEPLALDELLPH) lie within the membrane without spanning it. Residues glycine 334 and glycine 335 each contribute to the a ubiquinone site. Residues 401–421 (IPYPVFPGGAIIGCSAGFLNV) lie within the membrane without spanning it. Positions 578, 602, 605, and 608 each coordinate [4Fe-4S] cluster. A 4Fe-4S ferredoxin-type domain is found at 593-622 (PKLQINAQNCLHCKACDIKDPKQNIEWTVP).

The protein belongs to the ETF-QO/FixC family. [4Fe-4S] cluster serves as cofactor. It depends on FAD as a cofactor.

Its subcellular location is the mitochondrion inner membrane. The enzyme catalyses a ubiquinone + reduced [electron-transfer flavoprotein] = a ubiquinol + oxidized [electron-transfer flavoprotein] + H(+). With respect to regulation, up-regulated by KIN10, by S1-bZIP specific dimers, and also by C/S1 bZIP heterodimers. Functionally, accepts electrons from ETF and reduces ubiquinone. May act downstream of IVD and D2HGDH in the degradation of phytol or chlorophyll during dark-induced senescence and sugar starvation. In Arabidopsis thaliana (Mouse-ear cress), this protein is Electron transfer flavoprotein-ubiquinone oxidoreductase, mitochondrial (ETFQO).